The sequence spans 618 residues: Crinkler effector protein 16 (618 aa).

Residues 1–19 form the signal peptide; it reads MVVVSLQCAIVGQAGSSFD. The tract at residues 18–57 is LQLFLAK domain; it reads FDVEIDDGAKVSKLKDAIKAKKPNDFKVVDADKLHLFLAK. The interval 58–139 is DWL domain; sequence QPVEDESGKE…NMELPSSEQI (82 aa). The short motif at 140–146 is the HVLVXXP motif element; sequence HVLVVVP. Asn-534 carries an N-linked (GlcNAc...) asparagine glycan.

The protein belongs to the Crinkler effector family.

It is found in the secreted. The protein localises to the host nucleus. Secreted effector that elicits necrosis in host plants, a characteristic of plant innate immunity. In Phytophthora infestans (Potato late blight agent), this protein is Crinkler effector protein 16.